Consider the following 156-residue polypeptide: Small ribosomal subunit protein uS7 (156 aa).

Belongs to the universal ribosomal protein uS7 family. Part of the 30S ribosomal subunit. Contacts proteins S9 and S11.

One of the primary rRNA binding proteins, it binds directly to 16S rRNA where it nucleates assembly of the head domain of the 30S subunit. Is located at the subunit interface close to the decoding center, probably blocks exit of the E-site tRNA. This chain is Small ribosomal subunit protein uS7, found in Bacillus cereus (strain ZK / E33L).